The following is an 83-amino-acid chain: Small ribosomal subunit protein eS27 (83 aa).

The C4-type zinc-finger motif lies at 37–59 (CPGCFNITTVFSHAQTVVICGSC).

This sequence belongs to the eukaryotic ribosomal protein eS27 family. In terms of assembly, component of the small ribosomal subunit (SSU). Mature yeast ribosomes consist of a small (40S) and a large (60S) subunit. The 40S small subunit contains 1 molecule of ribosomal RNA (18S rRNA) and at least 33 different proteins. The large 60S subunit contains 3 rRNA molecules (25S, 5.8S and 5S rRNA) and at least 46 different proteins. Zn(2+) is required as a cofactor.

It is found in the cytoplasm. Its function is as follows. Component of the ribosome, a large ribonucleoprotein complex responsible for the synthesis of proteins in the cell. The small ribosomal subunit (SSU) binds messenger RNAs (mRNAs) and translates the encoded message by selecting cognate aminoacyl-transfer RNA (tRNA) molecules. The large subunit (LSU) contains the ribosomal catalytic site termed the peptidyl transferase center (PTC), which catalyzes the formation of peptide bonds, thereby polymerizing the amino acids delivered by tRNAs into a polypeptide chain. The nascent polypeptides leave the ribosome through a tunnel in the LSU and interact with protein factors that function in enzymatic processing, targeting, and the membrane insertion of nascent chains at the exit of the ribosomal tunnel. The protein is Small ribosomal subunit protein eS27 (rps27) of Schizosaccharomyces pombe (strain 972 / ATCC 24843) (Fission yeast).